A 290-amino-acid polypeptide reads, in one-letter code: 33 kDa chaperonin (290 aa).

Intrachain disulfides connect Cys235/Cys237 and Cys268/Cys271.

This sequence belongs to the HSP33 family. In terms of processing, under oxidizing conditions two disulfide bonds are formed involving the reactive cysteines. Under reducing conditions zinc is bound to the reactive cysteines and the protein is inactive.

The protein resides in the cytoplasm. In terms of biological role, redox regulated molecular chaperone. Protects both thermally unfolding and oxidatively damaged proteins from irreversible aggregation. Plays an important role in the bacterial defense system toward oxidative stress. In Streptococcus pneumoniae (strain P1031), this protein is 33 kDa chaperonin.